The following is a 764-amino-acid chain: MNGEADCPTDLEMAAPKGQDRWSQEDMLTLLECMKNNLPSNDSSKFKTTESHMDWEKVAFKDFSGDMCKLKWVEISNEVRKFRTLTELILDAQEHVKNPYKGKKLKKHPDFPKKPLTPYFRFFMEKRAKYAKLHPEMSNLDLTKILSKKYKELPEKKKMKYIQDFQREKQEFERNLARFREDHPDLIQNAKKSDIPEKPKTPQQLWYTHEKKVYLKVRPDATTKEVKDSLGKQWSQLSDKKRLKWIHKALEQRKEYEEIMRDYIQKHPELNISEEGITKSTLTKAERQLKDKFDGRPTKPPPNSYSLYCAELMANMKDVPSTERMVLCSQQWKLLSQKEKDAYHKKCDQKKKDYEVELLRFLESLPEEEQQRVLGEEKMLNINKKQATSPASKKPAQEGGKGGSEKPKRPVSAMFIFSEEKRRQLQEERPELSESELTRLLARMWNDLSEKKKAKYKAREAALKAQSERKPGGEREERGKLPESPKRAEEIWQQSVIGDYLARFKNDRVKALKAMEMTWNNMEKKEKLMWIKKAAEDQKRYERELSEMRAPPAATNSSKKMKFQGEPKKPPMNGYQKFSQELLSNGELNHLPLKERMVEIGSRWQRISQSQKEHYKKLAEEQQKQYKVHLDLWVKSLSPQDRAAYKEYISNKRKSMTKLRGPNPKSSRTTLQSKSESEEDDEEDEDDEDEDEEEEDDENGDSSEDGGDSSESSSEDESEDGDENEEDDEDEDDDEDDDEDEDNESEGSSSSSSSSGDSSDSDSN.

Met-1 is subject to N-acetylmethionine. The interval 1–21 (MNGEADCPTDLEMAAPKGQDR) is disordered. 2 DNA-binding regions (HMG box) span residues 112–180 (PKKP…ARFR) and 196–264 (PEKP…RDYI). Phosphothreonine is present on Thr-201. Residues Ser-273, Ser-336, Ser-364, Ser-389, Ser-412, Ser-433, Ser-435, Ser-484, Ser-495, Ser-546, Ser-584, and Ser-638 each carry the phosphoserine modification. The HMG box 3 DNA-binding region spans 298–362 (TKPPPNSYSL…DYEVELLRFL (65 aa)). A disordered region spans residues 381-411 (NINKKQATSPASKKPAQEGGKGGSEKPKRPV). DNA-binding regions (HMG box) lie at residues 407-475 (PKRP…GGER), 482-549 (PESP…SEMR), and 568-634 (KKPP…DLWV). The segment at 459 to 487 (REAALKAQSERKPGGEREERGKLPESPKR) is disordered. Positions 546–576 (SEMRAPPAATNSSKKMKFQGEPKKPPMNGYQ) are disordered. Residues 648–764 (YISNKRKSMT…SGDSSDSDSN (117 aa)) are disordered. A compositionally biased stretch (polar residues) spans 664 to 674 (PKSSRTTLQSK). The span at 677-745 (SEEDDEEDED…DDDEDEDNES (69 aa)) shows a compositional bias: acidic residues. The span at 746 to 758 (EGSSSSSSSSGDS) shows a compositional bias: low complexity.

As to quaternary structure, homodimer. Part of Pol I pre-initiation complex (PIC), in which Pol I core assembles with RRN3 and promoter-bound UTBF and SL1/TIF-IB complex. Interacts with TOP2A in the context of Pol I complex. Interacts with TBP. Interacts with TAF1A. Interacts with RASL11A. Binds to IRS1 and PIK3CA. Interacts with DHX33. Interacts with PHF6. Interacts with CEBPA (isoform 1 and isoform 4). Interacts with DDX11. Interacts with NOP53. Interacts with ALKBH2. Phosphorylated and activated by PIK3CA.

It localises to the nucleus. Its subcellular location is the nucleolus. In terms of biological role, recognizes the ribosomal RNA gene promoter and activates transcription mediated by RNA polymerase I (Pol I) through cooperative interactions with the transcription factor SL1/TIF-IB complex. It binds specifically to the upstream control element and can activate Pol I promoter escape. The sequence is that of Nucleolar transcription factor 1 (UBTF) from Homo sapiens (Human).